The primary structure comprises 337 residues: Inositol 2-dehydrogenase (337 aa).

This sequence belongs to the Gfo/Idh/MocA family. As to quaternary structure, homotetramer.

It catalyses the reaction myo-inositol + NAD(+) = scyllo-inosose + NADH + H(+). In terms of biological role, involved in the oxidation of myo-inositol (MI) to 2-keto-myo-inositol (2KMI or 2-inosose). This Burkholderia multivorans (strain ATCC 17616 / 249) protein is Inositol 2-dehydrogenase.